The sequence spans 536 residues: Phosphoenolpyruvate carboxykinase (ATP) (536 aa).

Positions 61, 195, and 201 each coordinate substrate. ATP-binding positions include Lys201, His220, and Gly236–Thr244. Mn(2+) is bound by residues Lys201 and His220. Asp257 contributes to the Mn(2+) binding site. 3 residues coordinate ATP: Glu285, Arg322, and Thr447. Arg322 is a substrate binding site.

This sequence belongs to the phosphoenolpyruvate carboxykinase (ATP) family. Requires Mn(2+) as cofactor.

The protein localises to the cytoplasm. The enzyme catalyses oxaloacetate + ATP = phosphoenolpyruvate + ADP + CO2. The protein operates within carbohydrate biosynthesis; gluconeogenesis. In terms of biological role, involved in the gluconeogenesis. Catalyzes the conversion of oxaloacetate (OAA) to phosphoenolpyruvate (PEP) through direct phosphoryl transfer between the nucleoside triphosphate and OAA. This chain is Phosphoenolpyruvate carboxykinase (ATP), found in Rhizobium etli (strain ATCC 51251 / DSM 11541 / JCM 21823 / NBRC 15573 / CFN 42).